The sequence spans 334 residues: Putative 2-hydroxyacid dehydrogenase UNK4.10 (334 aa).

NAD(+)-binding positions include 166–167, 244–246, and Asp-270; these read GI and TAR. Arg-246 is a catalytic residue. Glu-275 is an active-site residue. The active-site Proton donor is the His-293. Position 293–296 (293–296) interacts with NAD(+); sequence HLGT.

The protein belongs to the D-isomer specific 2-hydroxyacid dehydrogenase family.

The chain is Putative 2-hydroxyacid dehydrogenase UNK4.10 from Schizosaccharomyces pombe (strain 972 / ATCC 24843) (Fission yeast).